Consider the following 283-residue polypeptide: 2-dehydro-3-deoxyphosphooctonate aldolase (283 aa).

The protein belongs to the KdsA family.

Its subcellular location is the cytoplasm. The enzyme catalyses D-arabinose 5-phosphate + phosphoenolpyruvate + H2O = 3-deoxy-alpha-D-manno-2-octulosonate-8-phosphate + phosphate. The protein operates within carbohydrate biosynthesis; 3-deoxy-D-manno-octulosonate biosynthesis; 3-deoxy-D-manno-octulosonate from D-ribulose 5-phosphate: step 2/3. It participates in bacterial outer membrane biogenesis; lipopolysaccharide biosynthesis. This Vibrio campbellii (strain ATCC BAA-1116) protein is 2-dehydro-3-deoxyphosphooctonate aldolase.